The primary structure comprises 492 residues: MTAHVRPTDAKKLIKGATGNWEVVIGMEIHAQVSSNAKLFSGASTAFGGPPNDHVSLVDAAMPGMLPVINKECVAQAVRTGLGLRAQINLRSTFDRKNYFYPDLPQGYQISQYKSPIVGEGEVIVDLLDGESFVVGIERLHLEQDAGKSIHDLSPTLSFVDLNRSGVALMEIVSRPDLRSSEEARAYVTKLRSILRYLGTCDGDMEKGNLRADVNVSVRRPGEPLGTRCEIKNVNSIRFIGQAIEVEARRQIEILEDGGVIDQETRLFDPNKGETRSMRSKEEAHDYRYFPDPDLLPLVLHADFVEELKSHLPELPDEKKARFIADYGLSPYDASVLVAERDTADYFEQVAKGRDGKAAANFVINELFGRLNKDGKDVITSPVSPAQVAAIVDLIGEGVISSKIAKDLFEIVYTEGGDPRVLVEERGLKQVTDTGAIEKVVDEIIAANPDKVAQVQAKPTMLGWFVGQAMKASGGKANPQALNDILKRKLGI.

This sequence belongs to the GatB/GatE family. GatB subfamily. Heterotrimer of A, B and C subunits.

The enzyme catalyses L-glutamyl-tRNA(Gln) + L-glutamine + ATP + H2O = L-glutaminyl-tRNA(Gln) + L-glutamate + ADP + phosphate + H(+). The catalysed reaction is L-aspartyl-tRNA(Asn) + L-glutamine + ATP + H2O = L-asparaginyl-tRNA(Asn) + L-glutamate + ADP + phosphate + 2 H(+). Its function is as follows. Allows the formation of correctly charged Asn-tRNA(Asn) or Gln-tRNA(Gln) through the transamidation of misacylated Asp-tRNA(Asn) or Glu-tRNA(Gln) in organisms which lack either or both of asparaginyl-tRNA or glutaminyl-tRNA synthetases. The reaction takes place in the presence of glutamine and ATP through an activated phospho-Asp-tRNA(Asn) or phospho-Glu-tRNA(Gln). This Azorhizobium caulinodans (strain ATCC 43989 / DSM 5975 / JCM 20966 / LMG 6465 / NBRC 14845 / NCIMB 13405 / ORS 571) protein is Aspartyl/glutamyl-tRNA(Asn/Gln) amidotransferase subunit B.